The chain runs to 395 residues: Multiple organellar RNA editing factor 8, chloroplastic/mitochondrial (395 aa).

Residues Met1–Arg56 constitute a chloroplast and mitochondrion transit peptide. Over residues Ala211–Asn236 the composition is skewed to basic and acidic residues. The disordered stretch occupies residues Ala211–Gly395. The span at Gly240 to Ala300 shows a compositional bias: pro residues. Low complexity predominate over residues Gln313–Gly334. Residues Ala335–Gln355 show a composition bias toward pro residues. A compositionally biased stretch (low complexity) spans Tyr356–Asn385.

This sequence belongs to the MORF family. In terms of assembly, interacts with protoporphyrinogen oxidase 1 PPOX1. Interacts with PCMP-H52/MEF10. Homodimer and heterodimers with MORF1/RIP8, MORF2/RIP2, MORF3/RIP3, MORF4/RIP4, MORF5/RIP5, MORF6/RIP6 and MORF7/RIP7. Interacts with RBG3/ORRM3. Interacts with PCMP-A2/PMD1. Interacts with ORRM1 and VAT3/OZ1. Interacts with PCMP-H13/MEF35. Interacts with RBG5/ORRM4. Interacts with ORRM6.

It is found in the mitochondrion. It localises to the plastid. Its subcellular location is the chloroplast. Involved in organellar RNA editing. Required for the processing of numerous RNA editing sites in mitochondria and plastids. Binds to the plastid RARE1 factor, a pentatricopeptide repeat-containing protein involved in RNA editing. The chain is Multiple organellar RNA editing factor 8, chloroplastic/mitochondrial from Arabidopsis thaliana (Mouse-ear cress).